A 221-amino-acid chain; its full sequence is Glutathione S-transferase alpha-5 (221 aa).

The GST N-terminal domain occupies 3–83 (GKPVLHYFDG…YIATKYNLYG (81 aa)). N6-succinyllysine is present on lysine 4. Glutathione-binding positions include tyrosine 9, arginine 45, 54-55 (QV), and 67-68 (QT). Residues 85 to 207 (DMKERALIDM…LQPGSQRKPF (123 aa)) enclose the GST C-terminal domain.

It belongs to the GST superfamily. Alpha family. In terms of assembly, heterodimer of YC1 and YC2. Liver, nasal mucosa and epididymis.

Its subcellular location is the cytoplasm. It catalyses the reaction RX + glutathione = an S-substituted glutathione + a halide anion + H(+). Conjugation of reduced glutathione to a wide number of exogenous and endogenous hydrophobic electrophiles. Has substantial activity toward aflatoxin B1-8,9-epoxide. The chain is Glutathione S-transferase alpha-5 (Gsta5) from Rattus norvegicus (Rat).